We begin with the raw amino-acid sequence, 326 residues long: Pyruvate dehydrogenase E1 component subunit alpha (326 aa).

Heterodimer of an alpha and a beta chain. Requires thiamine diphosphate as cofactor.

It catalyses the reaction N(6)-[(R)-lipoyl]-L-lysyl-[protein] + pyruvate + H(+) = N(6)-[(R)-S(8)-acetyldihydrolipoyl]-L-lysyl-[protein] + CO2. In terms of biological role, the pyruvate dehydrogenase complex catalyzes the overall conversion of pyruvate to acetyl-CoA and CO(2). It contains multiple copies of three enzymatic components: pyruvate dehydrogenase (E1), dihydrolipoamide acetyltransferase (E2) and lipoamide dehydrogenase (E3). This chain is Pyruvate dehydrogenase E1 component subunit alpha (pdhA), found in Rickettsia conorii (strain ATCC VR-613 / Malish 7).